The chain runs to 618 residues: DNA mismatch repair protein MutL (618 aa).

Residues 367 to 381 (EPTAAREPATPRYSG) show a composition bias toward low complexity. The interval 367-402 (EPTAAREPATPRYSGGASGGNGGRQSAGGWPHAQPG) is disordered. Positions 382–392 (GASGGNGGRQS) are enriched in gly residues.

Belongs to the DNA mismatch repair MutL/HexB family.

Its function is as follows. This protein is involved in the repair of mismatches in DNA. It is required for dam-dependent methyl-directed DNA mismatch repair. May act as a 'molecular matchmaker', a protein that promotes the formation of a stable complex between two or more DNA-binding proteins in an ATP-dependent manner without itself being part of a final effector complex. This Salmonella dublin (strain CT_02021853) protein is DNA mismatch repair protein MutL.